The primary structure comprises 61 residues: Weak toxin CM-2a (61 aa).

4 cysteine pairs are disulfide-bonded: C3/C19, C12/C37, C41/C49, and C50/C55.

It belongs to the three-finger toxin family. Short-chain subfamily. Orphan group XX sub-subfamily. In terms of tissue distribution, expressed by the venom gland.

The protein resides in the secreted. The polypeptide is Weak toxin CM-2a (Naja annulifera (Banded Egyptian cobra)).